The chain runs to 1256 residues: N-acetylglucosamine-1-phosphotransferase subunits alpha/beta (1256 aa).

Residues 22–42 (VCFLGVVVTIVSAFQFGEVVL) form a helical membrane-spanning segment. N-linked (GlcNAc...) asparagine glycans are attached at residues Asn-83, Asn-114, Asn-148, Asn-179, and Asn-250. Disulfide bonds link Cys-438/Cys-461, Cys-452/Cys-468, Cys-505/Cys-528, and Cys-519/Cys-535. 2 LNR repeats span residues 438-473 (CAEGCPGSWIKDGYCDKACNNSACDWDGGDCSGNSG) and 505-545 (CNQG…ELYK). 6 residues coordinate Ca(2+): Asp-449, Asp-464, Asp-467, Asp-516, Asp-531, and Asp-534. Residues Asn-614, Asn-699, Asn-729, Asn-829, and Asn-1009 are each glycosylated (N-linked (GlcNAc...) asparagine). In terms of domain architecture, DMAP1-binding spans 699–798 (NISLLPKDAQ…TFPAVSVKVN (100 aa)). Residues 1005-1040 (VQPLNISQVFDEVDTDQSGVLSDREIRTLATRIHEL) form the EF-hand domain. Ca(2+) is bound by residues Asp-1018, Asp-1020, Ser-1022, and Glu-1029. Asn-1129 carries an N-linked (GlcNAc...) asparagine glycan. Residues 1215–1235 (VLATLIMFTIFSFFAEQLIAL) form a helical membrane-spanning segment.

The protein belongs to the stealth family. As to quaternary structure, hexamer of two alpha, two beta and two gamma (GNPTG) subunits; disulfide-linked. The alpha and/or the beta subunits of the enzyme constitute the catalytic subunits. Interacts with LYSET; facilitates proper localization of GNPTAB. In terms of processing, the alpha- and beta-subunits are generated by a proteolytic cleavage by MBTPS1 protease at the Lys-928-Asp-929 bond. Expressed in the heart, whole brain, placenta, lung, liver, skeletal muscle, kidney and pancreas.

Its subcellular location is the golgi apparatus membrane. It catalyses the reaction N(4)-[alpha-D-mannosyl-(1-&gt;2)-alpha-D-mannosyl-(glycan)]-L-asparaginyl-[protein] + UDP-N-acetyl-alpha-D-glucosamine = N(4)-[6-(N-acetyl-alpha-D-glucosaminyl-1-phospho)-alpha-D-mannosyl-(1-&gt;2)-alpha-D-mannosyl-(glycan)]-L-asparaginyl-[protein] + UMP + H(+). Its function is as follows. Catalyzes the formation of mannose 6-phosphate (M6P) markers on high mannose type oligosaccharides in the Golgi apparatus. M6P residues are required to bind to the M6P receptors (MPR), which mediate the vesicular transport of lysosomal enzymes to the endosomal/prelysosomal compartment. In Homo sapiens (Human), this protein is N-acetylglucosamine-1-phosphotransferase subunits alpha/beta (GNPTAB).